The following is an 895-amino-acid chain: Splicing factor 3B subunit 2 (895 aa).

Positions 1 to 10 (MATEHPEPPK) are enriched in basic and acidic residues. 4 disordered regions span residues 1–24 (MATE…PGHY), 65–136 (LNRP…LRVG), 197–373 (AKMG…EYVT), and 400–453 (KKEK…SKKK). Residue lysine 10 forms a Glycyl lysine isopeptide (Lys-Gly) (interchain with G-Cter in SUMO2) linkage. The SAP domain occupies 24 to 58 (YGAWAAQELQAKLAEIGAPIQGNREELVERLQSYT). Pro residues-rich tracts occupy residues 90–114 (IPMP…PPPG) and 122–133 (AHPPNLGPPPPL). Positions 140–199 (ALSEEERLKLAQQQAALLMQQEERAKQQGDHSLKEHELLEQQKRAAVLLEQERQQEIAKM) form a coiled coil. A compositionally biased stretch (low complexity) spans 218–238 (PLGPRVAAPVGPVGPTPTVLP). Residues arginine 222, arginine 245, and arginine 247 each carry the omega-N-methylarginine modification. Positions 241–254 (APVPRPRGPPPPPG) are enriched in pro residues. Lysine 275 carries the N6-acetyllysine modification. Over residues 277-286 (LQLKESRQEE) the composition is skewed to basic and acidic residues. Residue lysine 280 forms a Glycyl lysine isopeptide (Lys-Gly) (interchain with G-Cter in SUMO2) linkage. Serine 289 bears the Phosphoserine mark. A Phosphothreonine modification is found at threonine 298. Residues serine 307 and serine 309 each carry the phosphoserine modification. Phosphothreonine is present on threonine 311. Phosphoserine is present on serine 317. Residues 322–338 (EKNRKRRNRKKKKKPQR) are compositionally biased toward basic residues. Basic and acidic residues predominate over residues 347–359 (SGDREKDSTRSRG). A phosphoserine mark is found at serine 360 and serine 362. Glycyl lysine isopeptide (Lys-Gly) (interchain with G-Cter in SUMO2) cross-links involve residues lysine 400 and lysine 412. Composition is skewed to basic and acidic residues over residues 400–414 (KKEK…DKLE) and 422–431 (KGFEEEHKDS). The tract at residues 401-550 (KEKEKEPEKL…QEKEEQKTMK (150 aa)) is required for interaction with PRMT9. 3 positions are modified to phosphoserine: serine 431, serine 435, and serine 436. Lysine 492 is covalently cross-linked (Glycyl lysine isopeptide (Lys-Gly) (interchain with G-Cter in SUMO2)). Arginine 508 is subject to Omega-N-methylarginine; by PRMT9; alternate. Symmetric dimethylarginine; by PRMT9; alternate is present on arginine 508. At arginine 515 the chain carries Omega-N-methylarginine. A Glycyl lysine isopeptide (Lys-Gly) (interchain with G-Cter in SUMO2) cross-link involves residue lysine 543. A disordered region spans residues 691–757 (AAEFQTKTEE…PGGFSSVPAG (67 aa)). Over residues 712 to 732 (EPSDEESSEEEEEEESDEDKP) the composition is skewed to acidic residues. Lysine 770 participates in a covalent cross-link: Glycyl lysine isopeptide (Lys-Gly) (interchain with G-Cter in SUMO2). At threonine 780 the chain carries Phosphothreonine. Residues lysine 790, lysine 843, and lysine 857 each participate in a glycyl lysine isopeptide (Lys-Gly) (interchain with G-Cter in SUMO2) cross-link. Over residues 844-869 (YEEHVREQQAQVEKEDFSDMVAEHAA) the composition is skewed to basic and acidic residues. The interval 844–895 (YEEHVREQQAQVEKEDFSDMVAEHAAKQKQKKRKAQPQDSRGGSKKYKEFKF) is disordered. At serine 861 the chain carries Phosphoserine.

As to quaternary structure, component of the 17S U2 SnRNP complex, a ribonucleoprotein complex that contains small nuclear RNA (snRNA) U2 and a number of specific proteins. Part of the SF3B subcomplex of the 17S U2 SnRNP complex. SF3B associates with the splicing subcomplex SF3A and a 12S RNA unit to form the U2 small nuclear ribonucleoproteins complex (U2 snRNP). Within the SF3B complex, interacts directly with SF3B4. Found in a complex with PRMT9, SF3B2 and SF3B4. Interacts (Arg-508-methylated form) with SMN1 (via Tudor domain). Interacts with RBM7. Interacts with ERCC6. Component of the minor spliceosome. Within this complex, interacts with SCNM1 and CRIPT. (Microbial infection) Interacts with HIV-1 Vpr. In terms of processing, methylation at Arg-508 by PRMT9 is required for the interaction with SMN1.

The protein localises to the nucleus. It is found in the nucleus speckle. In terms of biological role, component of the 17S U2 SnRNP complex of the spliceosome, a large ribonucleoprotein complex that removes introns from transcribed pre-mRNAs. The 17S U2 SnRNP complex (1) directly participates in early spliceosome assembly and (2) mediates recognition of the intron branch site during pre-mRNA splicing by promoting the selection of the pre-mRNA branch-site adenosine, the nucleophile for the first step of splicing. Within the 17S U2 SnRNP complex, SF3B2 is part of the SF3B subcomplex, which is required for 'A' complex assembly formed by the stable binding of U2 snRNP to the branchpoint sequence in pre-mRNA. Sequence independent binding of SF3A and SF3B subcomplexes upstream of the branch site is essential, it may anchor U2 snRNP to the pre-mRNA. May also be involved in the assembly of the 'E' complex. Also acts as a component of the minor spliceosome, which is involved in the splicing of U12-type introns in pre-mRNAs. The sequence is that of Splicing factor 3B subunit 2 (SF3B2) from Homo sapiens (Human).